The sequence spans 336 residues: Holliday junction branch migration complex subunit RuvB (336 aa).

Residues 4–184 (ADRLISASGG…FGIVQRLEFY (181 aa)) form a large ATPase domain (RuvB-L) region. ATP contacts are provided by residues I23, R24, G65, K68, T69, T70, 131-133 (EDY), R174, Y184, and R221. Residue T69 participates in Mg(2+) binding. The interval 185-255 (NVKDLTDIVA…IAARAMDMLD (71 aa)) is small ATPAse domain (RuvB-S). The interval 258–336 (NEGFDFMDRK…HFGLQRPDEG (79 aa)) is head domain (RuvB-H). DNA is bound by residues R313 and R318.

Belongs to the RuvB family. In terms of assembly, homohexamer. Forms an RuvA(8)-RuvB(12)-Holliday junction (HJ) complex. HJ DNA is sandwiched between 2 RuvA tetramers; dsDNA enters through RuvA and exits via RuvB. An RuvB hexamer assembles on each DNA strand where it exits the tetramer. Each RuvB hexamer is contacted by two RuvA subunits (via domain III) on 2 adjacent RuvB subunits; this complex drives branch migration. In the full resolvosome a probable DNA-RuvA(4)-RuvB(12)-RuvC(2) complex forms which resolves the HJ.

The protein localises to the cytoplasm. It carries out the reaction ATP + H2O = ADP + phosphate + H(+). The RuvA-RuvB-RuvC complex processes Holliday junction (HJ) DNA during genetic recombination and DNA repair, while the RuvA-RuvB complex plays an important role in the rescue of blocked DNA replication forks via replication fork reversal (RFR). RuvA specifically binds to HJ cruciform DNA, conferring on it an open structure. The RuvB hexamer acts as an ATP-dependent pump, pulling dsDNA into and through the RuvAB complex. RuvB forms 2 homohexamers on either side of HJ DNA bound by 1 or 2 RuvA tetramers; 4 subunits per hexamer contact DNA at a time. Coordinated motions by a converter formed by DNA-disengaged RuvB subunits stimulates ATP hydrolysis and nucleotide exchange. Immobilization of the converter enables RuvB to convert the ATP-contained energy into a lever motion, pulling 2 nucleotides of DNA out of the RuvA tetramer per ATP hydrolyzed, thus driving DNA branch migration. The RuvB motors rotate together with the DNA substrate, which together with the progressing nucleotide cycle form the mechanistic basis for DNA recombination by continuous HJ branch migration. Branch migration allows RuvC to scan DNA until it finds its consensus sequence, where it cleaves and resolves cruciform DNA. This chain is Holliday junction branch migration complex subunit RuvB, found in Aeromonas hydrophila subsp. hydrophila (strain ATCC 7966 / DSM 30187 / BCRC 13018 / CCUG 14551 / JCM 1027 / KCTC 2358 / NCIMB 9240 / NCTC 8049).